The sequence spans 307 residues: Elongation factor Ts (307 aa).

The segment at 80–83 (TDFV) is involved in Mg(2+) ion dislocation from EF-Tu.

It belongs to the EF-Ts family.

The protein resides in the cytoplasm. Associates with the EF-Tu.GDP complex and induces the exchange of GDP to GTP. It remains bound to the aminoacyl-tRNA.EF-Tu.GTP complex up to the GTP hydrolysis stage on the ribosome. The sequence is that of Elongation factor Ts from Albidiferax ferrireducens (strain ATCC BAA-621 / DSM 15236 / T118) (Rhodoferax ferrireducens).